The primary structure comprises 169 residues: Crossover junction endodeoxyribonuclease RuvC (169 aa).

Active-site residues include D11, E71, and D143. Positions 11, 71, and 143 each coordinate Mg(2+).

Belongs to the RuvC family. As to quaternary structure, homodimer which binds Holliday junction (HJ) DNA. The HJ becomes 2-fold symmetrical on binding to RuvC with unstacked arms; it has a different conformation from HJ DNA in complex with RuvA. In the full resolvosome a probable DNA-RuvA(4)-RuvB(12)-RuvC(2) complex forms which resolves the HJ. The cofactor is Mg(2+).

Its subcellular location is the cytoplasm. It catalyses the reaction Endonucleolytic cleavage at a junction such as a reciprocal single-stranded crossover between two homologous DNA duplexes (Holliday junction).. Functionally, the RuvA-RuvB-RuvC complex processes Holliday junction (HJ) DNA during genetic recombination and DNA repair. Endonuclease that resolves HJ intermediates. Cleaves cruciform DNA by making single-stranded nicks across the HJ at symmetrical positions within the homologous arms, yielding a 5'-phosphate and a 3'-hydroxyl group; requires a central core of homology in the junction. The consensus cleavage sequence is 5'-(A/T)TT(C/G)-3'. Cleavage occurs on the 3'-side of the TT dinucleotide at the point of strand exchange. HJ branch migration catalyzed by RuvA-RuvB allows RuvC to scan DNA until it finds its consensus sequence, where it cleaves and resolves the cruciform DNA. The sequence is that of Crossover junction endodeoxyribonuclease RuvC from Allorhizobium ampelinum (strain ATCC BAA-846 / DSM 112012 / S4) (Agrobacterium vitis (strain S4)).